The primary structure comprises 195 residues: Interferon tau-1 (195 aa).

An N-terminal signal peptide occupies residues 1–23; the sequence is MAFVLSLLMALVLVSYGPGRSLG. Disulfide bonds link cysteine 24–cysteine 122 and cysteine 52–cysteine 162. The N-linked (GlcNAc...) asparagine glycan is linked to asparagine 101.

This sequence belongs to the alpha/beta interferon family. IFN-alphaII subfamily. In terms of tissue distribution, constitutively and exclusively expressed in the mononuclear cells of the extraembryonic trophectoderm.

Its subcellular location is the secreted. Functionally, paracrine hormone primarily responsible for maternal recognition of pregnancy. Interacts with endometrial receptors, probably type I interferon receptors, and blocks estrogen receptor expression, preventing the estrogen-induced increase in oxytocin receptor expression in the endometrium. This results in the suppression of the pulsatile endometrial release of the luteolytic hormone prostaglandin F2-alpha, hindering the regression of the corpus luteum (luteolysis) and therefore a return to ovarian cyclicity. This, and a possible direct effect of IFN-tau on prostaglandin synthesis, leads in turn to continued ovarian progesterone secretion, which stimulates the secretion by the endometrium of the nutrients required for the growth of the conceptus. In summary, displays particularly high antiviral and antiproliferative potency concurrently with particular weak cytotoxicity, high antiluteolytic activity and immunomodulatory properties. In contrast with other IFNs, IFN-tau is not virally inducible. This chain is Interferon tau-1 (IFNT1), found in Bos taurus (Bovine).